Consider the following 249-residue polypeptide: Aspartate/glutamate leucyltransferase (249 aa).

The protein belongs to the R-transferase family. Bpt subfamily.

It is found in the cytoplasm. It catalyses the reaction N-terminal L-glutamyl-[protein] + L-leucyl-tRNA(Leu) = N-terminal L-leucyl-L-glutamyl-[protein] + tRNA(Leu) + H(+). It carries out the reaction N-terminal L-aspartyl-[protein] + L-leucyl-tRNA(Leu) = N-terminal L-leucyl-L-aspartyl-[protein] + tRNA(Leu) + H(+). Functions in the N-end rule pathway of protein degradation where it conjugates Leu from its aminoacyl-tRNA to the N-termini of proteins containing an N-terminal aspartate or glutamate. This is Aspartate/glutamate leucyltransferase from Brucella melitensis biotype 2 (strain ATCC 23457).